The primary structure comprises 154 residues: Fibroblast growth factor 2 (154 aa).

Positions 1-9 (MAASGITSL) are excised as a propeptide. Asparagine 35 contacts heparin. At tyrosine 81 the chain carries Phosphotyrosine; by TEC. Lysine 94 participates in a covalent cross-link: Glycyl lysine isopeptide (Lys-Gly) (interchain with G-Cter in SUMO1). Positions 127–143 (KRTGQYKLGSKTGPGQK) are heparin-binding.

Belongs to the heparin-binding growth factors family. Monomer. Homodimer. Interacts with FGFR1, FGFR2, FGFR3 and FGFR4. Affinity between fibroblast growth factors (FGFs) and their receptors is increased by heparan sulfate glycosaminoglycans that function as coreceptors. Interacts with CSPG4, FGFBP1 and TEC. Found in a complex with FGFBP1, FGF1 and FGF2. Interacts with FGFBP3. Interacts with integrin ITGAV:ITGB3; the interaction is required for FGF2 signaling. Interacts with SNORC (via the extracellular domain). Interacts with glypican GPC3. Phosphorylation at Tyr-81 regulates FGF2 unconventional secretion.

Its subcellular location is the secreted. It is found in the nucleus. Acts as a ligand for FGFR1, FGFR2, FGFR3 and FGFR4. Also acts as an integrin ligand which is required for FGF2 signaling. Binds to integrin ITGAV:ITGB3. Plays an important role in the regulation of cell survival, cell division, cell differentiation and cell migration. Functions as a potent mitogen in vitro. Can induce angiogenesis. Mediates phosphorylation of ERK1/2 and thereby promotes retinal lens fiber differentiation. The polypeptide is Fibroblast growth factor 2 (Fgf2) (Mus musculus (Mouse)).